Reading from the N-terminus, the 271-residue chain is Formamidopyrimidine-DNA glycosylase (271 aa).

Proline 2 (schiff-base intermediate with DNA) is an active-site residue. Catalysis depends on glutamate 3, which acts as the Proton donor. The active-site Proton donor; for beta-elimination activity is the lysine 58. Positions 90, 108, and 151 each coordinate DNA. Residues 236-271 (QVYGRDGQPCHRDDGGTIRRFAQGGRSTWYCPRCQR) form an FPG-type; degenerate zinc finger. Residue arginine 261 is the Proton donor; for delta-elimination activity of the active site.

The protein belongs to the FPG family. Monomer. Zn(2+) is required as a cofactor.

The enzyme catalyses Hydrolysis of DNA containing ring-opened 7-methylguanine residues, releasing 2,6-diamino-4-hydroxy-5-(N-methyl)formamidopyrimidine.. It carries out the reaction 2'-deoxyribonucleotide-(2'-deoxyribose 5'-phosphate)-2'-deoxyribonucleotide-DNA = a 3'-end 2'-deoxyribonucleotide-(2,3-dehydro-2,3-deoxyribose 5'-phosphate)-DNA + a 5'-end 5'-phospho-2'-deoxyribonucleoside-DNA + H(+). Involved in base excision repair of DNA damaged by oxidation or by mutagenic agents. Acts as a DNA glycosylase that recognizes and removes damaged bases. Has a preference for oxidized purines, such as 7,8-dihydro-8-oxoguanine (8-oxoG). Has AP (apurinic/apyrimidinic) lyase activity and introduces nicks in the DNA strand. Cleaves the DNA backbone by beta-delta elimination to generate a single-strand break at the site of the removed base with both 3'- and 5'-phosphates. The polypeptide is Formamidopyrimidine-DNA glycosylase (Erythrobacter litoralis (strain HTCC2594)).